A 104-amino-acid polypeptide reads, in one-letter code: Phosphoribosyl-ATP pyrophosphatase (104 aa).

Belongs to the PRA-PH family.

The protein resides in the cytoplasm. The enzyme catalyses 1-(5-phospho-beta-D-ribosyl)-ATP + H2O = 1-(5-phospho-beta-D-ribosyl)-5'-AMP + diphosphate + H(+). It functions in the pathway amino-acid biosynthesis; L-histidine biosynthesis; L-histidine from 5-phospho-alpha-D-ribose 1-diphosphate: step 2/9. This chain is Phosphoribosyl-ATP pyrophosphatase, found in Streptococcus gordonii (strain Challis / ATCC 35105 / BCRC 15272 / CH1 / DL1 / V288).